A 471-amino-acid polypeptide reads, in one-letter code: MAAMETETAPLTLESLPTDPLLLILSFLDYRDLINCCYVSRRLSQLSSHDPLWRRHCKKYWLISEEEKTQKNQCWKSLFIDTYSDVGRYIDHYAAIKKAWDDLKKYLEPRCPRMVLSLKEGAREEDLDAVEAQIGCKLPDDYRCSYRIHNGQKLVVPGLLGSMALSNHYRSEDLLDVDTAAGGFQQRQGLKYCLPLTFCIHTGLSQYIAVEAAEGRNKNEVFYQCPDQMARNPAAIDMFIIGATFTDWFTSYVKNVVSGGFPIIRDQIFRYVHDPECVATTGDITVSVSTSFLPELSSVHPPHYFFTYRIRIEMSKDALPEKACQLDSRYWRITNAKGDVEEVQGPGVVGEFPIISPGRVYEYTSCTTFSTTSGYMEGYYTFHFLYFKDKIFNVAIPRFHMACPTFRVSIARLEMGPDEYEEMEEEEEEEEEEDEDDDSADMDESDEDDEEERRRRVFDVPIRRRRCSRLF.

Residues 10–56 (PLTLESLPTDPLLLILSFLDYRDLINCCYVSRRLSQLSSHDPLWRRH) form the F-box domain. Positions 278–408 (VATTGDITVS…FHMACPTFRV (131 aa)) constitute an ApaG domain. A compositionally biased stretch (acidic residues) spans 419-451 (EYEEMEEEEEEEEEEDEDDDSADMDESDEDDEE). Residues 419–455 (EYEEMEEEEEEEEEEDEDDDSADMDESDEDDEEERRR) form a disordered region.

Part of a SCF (SKP1-cullin-F-box) protein ligase complex SCF(FBXO3) consisting of FBXO3, SKP1, CUL1 and RBX1. Interacts with PML, interaction is direct and takes place either alone or within the SCF complex. As to quaternary structure, (Microbial infection) Interacts (via ApaG domain) with Rift valley fever virus NSs helical filament; this interaction forms a filamentous E3 which mediates degradation of TFIIH complex through interaction with GT2H1.

It localises to the nucleus. The protein operates within protein modification; protein ubiquitination. Substrate recognition component of the SCF (SKP1-CUL1-F-box protein)-type E3 ubiquitin ligase complex, SCF(FBXO3), which mediates the ubiquitination and subsequent proteasomal degradation of target proteins. Mediates the ubiquitination of HIPK2 and probably that of EP300, leading to rapid degradation by the proteasome. In the presence of PML, HIPK2 ubiquitination still occurs, but degradation is prevented. PML, HIPK2 and FBXO3 may act synergically to activate p53/TP53-dependent transactivation. The SCF(FBXO3) also acts as a regulator of inflammation by mediating ubiquitination and degradation of FBXL2 in response to lipopolysaccharide (LPS). The SCF(FBXO3) complex specifically recognizes FBXL2 phosphorylated at 'Thr-404' and promotes its ubiquitination. Its function is as follows. (Microbial infection) Associates with the Rift valley fever virus NSs to form a remodeled E3 ligase that triggers efficient proteasomal degradation of targeted proteins. The filamentous E3 ligase targets the TFIIH complex leading to robust inhibition of antiviral immunity and enhances viral pathogenesis. The polypeptide is F-box only protein 3 (Homo sapiens (Human)).